A 61-amino-acid polypeptide reads, in one-letter code: Large ribosomal subunit protein bL32 (61 aa).

Over residues 1–19 the composition is skewed to basic residues; the sequence is MAHPKRRQSKTRTAKRRTH. Residues 1–20 are disordered; it reads MAHPKRRQSKTRTAKRRTHD.

This sequence belongs to the bacterial ribosomal protein bL32 family.

This Bacteroides fragilis (strain YCH46) protein is Large ribosomal subunit protein bL32.